A 140-amino-acid polypeptide reads, in one-letter code: Sex-regulated protein janus-B (140 aa).

Arg-42 provides a ligand contact to substrate. His-69 acts as the Proton acceptor in catalysis. Ser-110 to Thr-112 is a substrate binding site.

The protein belongs to the janus family.

Its function is as follows. JanA and janB regulate somatic sex differentiation. This is Sex-regulated protein janus-B (janB) from Drosophila sechellia (Fruit fly).